The sequence spans 425 residues: Protein CLP1 homolog (425 aa).

Residues glutamate 18, lysine 59, and 121–126 (DVGKST) contribute to the ATP site.

It belongs to the Clp1 family. Clp1 subfamily.

The protein localises to the nucleus. In terms of biological role, required for endonucleolytic cleavage during polyadenylation-dependent pre-mRNA 3'-end formation. This chain is Protein CLP1 homolog (cbc), found in Drosophila pseudoobscura pseudoobscura (Fruit fly).